A 200-amino-acid polypeptide reads, in one-letter code: Holliday junction branch migration complex subunit RuvA (200 aa).

The segment at 1–64 (MIAHLTGLVG…EDAFLLYGFA (64 aa)) is domain I. The domain II stretch occupies residues 65-143 (EAAERDWFRL…RMPAGPGVTI (79 aa)). The interval 144–147 (AAPP) is flexible linker. Residues 148 to 200 (ASGGVEADALLALAGLGFRRAEAQPVVGRILARLDGKADLDVVIRESLRELAR) form a domain III region.

It belongs to the RuvA family. In terms of assembly, homotetramer. Forms an RuvA(8)-RuvB(12)-Holliday junction (HJ) complex. HJ DNA is sandwiched between 2 RuvA tetramers; dsDNA enters through RuvA and exits via RuvB. An RuvB hexamer assembles on each DNA strand where it exits the tetramer. Each RuvB hexamer is contacted by two RuvA subunits (via domain III) on 2 adjacent RuvB subunits; this complex drives branch migration. In the full resolvosome a probable DNA-RuvA(4)-RuvB(12)-RuvC(2) complex forms which resolves the HJ.

The protein resides in the cytoplasm. In terms of biological role, the RuvA-RuvB-RuvC complex processes Holliday junction (HJ) DNA during genetic recombination and DNA repair, while the RuvA-RuvB complex plays an important role in the rescue of blocked DNA replication forks via replication fork reversal (RFR). RuvA specifically binds to HJ cruciform DNA, conferring on it an open structure. The RuvB hexamer acts as an ATP-dependent pump, pulling dsDNA into and through the RuvAB complex. HJ branch migration allows RuvC to scan DNA until it finds its consensus sequence, where it cleaves and resolves the cruciform DNA. This Gluconacetobacter diazotrophicus (strain ATCC 49037 / DSM 5601 / CCUG 37298 / CIP 103539 / LMG 7603 / PAl5) protein is Holliday junction branch migration complex subunit RuvA.